The following is a 183-amino-acid chain: MIIKPDDRWRWYFDDEQQKLMLDLANGMIFRSRFPSKMLSATAHQSSPFTVDDAALYYGYDEQIRQIDMPSESRAELALNALIAHRFLKPLMPKSWYFEVSHSSTRPYLAQVVETALKDSNEKVLFLVAEVGEQACLCLLAQPQLALFDRTLTFCDPLKIMNDRLSEYHKQSEPRSFLYEKVI.

The protein belongs to the ZapC family. In terms of assembly, interacts directly with FtsZ.

It localises to the cytoplasm. Contributes to the efficiency of the cell division process by stabilizing the polymeric form of the cell division protein FtsZ. Acts by promoting interactions between FtsZ protofilaments and suppressing the GTPase activity of FtsZ. This chain is Cell division protein ZapC, found in Proteus mirabilis (strain HI4320).